A 266-amino-acid polypeptide reads, in one-letter code: Type III pantothenate kinase (266 aa).

An ATP-binding site is contributed by 9–16; that stretch reads DAGNSRIK. Residues tyrosine 96 and 103–106 contribute to the substrate site; that span reads GSDR. The active-site Proton acceptor is aspartate 105. Threonine 129 provides a ligand contact to ATP. Threonine 189 contacts substrate.

Belongs to the type III pantothenate kinase family. As to quaternary structure, homodimer. Requires NH4(+) as cofactor. K(+) is required as a cofactor.

The protein resides in the cytoplasm. The catalysed reaction is (R)-pantothenate + ATP = (R)-4'-phosphopantothenate + ADP + H(+). It participates in cofactor biosynthesis; coenzyme A biosynthesis; CoA from (R)-pantothenate: step 1/5. In terms of biological role, catalyzes the phosphorylation of pantothenate (Pan), the first step in CoA biosynthesis. The protein is Type III pantothenate kinase of Burkholderia lata (strain ATCC 17760 / DSM 23089 / LMG 22485 / NCIMB 9086 / R18194 / 383).